A 489-amino-acid chain; its full sequence is MRLLLPFSSPLSATSSPSTPQFIPELPPPSQFDYSGLTKILKKSVIGTLTGALSLTLVFSSPISSVAATNDPYLSVNPPSSSFESSLNHFDSAPEDCPNEEEADTEIQDDDIEPQLVTNEGIVEEAWEIVNGAFLDTRSHSWTPETWQKQKDDILASPIKSRSKAHEVIKNMLASLGDQYTRFLSPDEFSRMSKYDITGIGINLREVSDGGGNVKLKVLGLVLDSAADIAGVKQGDEILAVNGMDVSGKSSFEVSSLLQGPSKTFVVLKVKHGKCGPVKSLKIQRQVNAQTPVSYRLEKVDNGTVSVGYIRLKEFNALARKDLVIAMKRLLDKGASYFVMDLRDNLGGLVQAGIETAKLFLDEGDTVIYTAGRDPEAQKTVVSDKKPLITAPLIVMVNNRTASASEIVASALHDNCKAVLVGERTYGKGLIQSVYELRDGSGVVVTIGKYVTPNHMDINGGGIEPDFRNLPAWDEVKERLSKCSILQQS.

Low complexity predominate over residues 1–20 (MRLLLPFSSPLSATSSPSTP). Residues 1 to 27 (MRLLLPFSSPLSATSSPSTPQFIPELP) form a disordered region. A PDZ domain is found at 189-273 (FSRMSKYDIT…TFVVLKVKHG (85 aa)). Active-site charge relay system residues include S403 and K428.

It belongs to the peptidase S41A family.

It is found in the plastid. It localises to the chloroplast thylakoid lumen. It carries out the reaction The enzyme shows specific recognition of a C-terminal tripeptide, Xaa-Yaa-Zaa, in which Xaa is preferably Ala or Leu, Yaa is preferably Ala or Tyr, and Zaa is preferably Ala, but then cleaves at a variable distance from the C-terminus. A typical cleavage is -Ala-Ala-|-Arg-Ala-Ala-Lys-Glu-Asn-Tyr-Ala-Leu-Ala-Ala.. Protease involved in the C-terminal processing of the chloroplastic D1 protein of photosystem II. This proteolytic processing is necessary to allow the light-driven assembly of the tetranuclear manganese cluster, which is responsible for photosynthetic water oxidation. In Arabidopsis thaliana (Mouse-ear cress), this protein is Carboxyl-terminal-processing peptidase 1, chloroplastic (CTPA1).